The chain runs to 597 residues: Ribosomal oxygenase 1 (597 aa).

M1 is modified (N-acetylmethionine). The disordered stretch occupies residues M1–D138. 2 stretches are compositionally biased toward basic residues: residues K14–P24 and R37–A48. A compositionally biased stretch (low complexity) spans A49 to S62. A phosphoserine mark is found at S62 and S65. Residues V72–E81 show a composition bias toward basic and acidic residues. A Phosphoserine modification is found at S86. In terms of domain architecture, JmjC spans C250 to A395. Fe cation contacts are provided by H296, D298, and H361.

It belongs to the ROX family. NO66 subfamily. In terms of assembly, interacts with SP7/OSX; the interaction is direct. Interacts with MYC. Interacts with PHF19; leading to its recruitment to H3K36me3 sites. The cofactor is Fe(2+).

The protein localises to the nucleus. It is found in the nucleolus. It localises to the nucleoplasm. It carries out the reaction N(6),N(6)-dimethyl-L-lysyl(36)-[histone H3] + 2 2-oxoglutarate + 2 O2 = L-lysyl(36)-[histone H3] + 2 formaldehyde + 2 succinate + 2 CO2. It catalyses the reaction N(6)-methyl-L-lysyl-[protein] + 2-oxoglutarate + O2 = L-lysyl-[protein] + formaldehyde + succinate + CO2. The catalysed reaction is L-histidyl-[protein] + 2-oxoglutarate + O2 = (3S)-3-hydroxy-L-histidyl-[protein] + succinate + CO2. Oxygenase that can act as both a histone lysine demethylase and a ribosomal histidine hydroxylase. Specifically demethylates 'Lys-4' (H3K4me) and 'Lys-36' (H3K36me) of histone H3, thereby playing a central role in histone code. Preferentially demethylates trimethylated H3 'Lys-4' (H3K4me3) and monomethylated H3 'Lys-4' (H3K4me1) residues, while it has weaker activity for dimethylated H3 'Lys-36' (H3K36me2). Acts as a regulator of osteoblast differentiation via its interaction with SP7/OSX by demethylating H3K4me and H3K36me, thereby inhibiting SP7/OSX-mediated promoter activation. Also catalyzes demethylation of non-histone proteins, such as CGAS: demethylation of monomethylated CGAS promotes interaction between CGAS and PARP1, followed by PARP1 inactivation. Also catalyzes the hydroxylation of 60S ribosomal protein L8 on 'His-216', thereby playing a role in ribosome biogenesis. Participates in MYC-induced transcriptional activation. This chain is Ribosomal oxygenase 1, found in Rattus norvegicus (Rat).